A 501-amino-acid polypeptide reads, in one-letter code: Lysine--tRNA ligase (501 aa).

Residues glutamate 412 and glutamate 419 each coordinate Mg(2+).

This sequence belongs to the class-II aminoacyl-tRNA synthetase family. Homodimer. Requires Mg(2+) as cofactor.

Its subcellular location is the cytoplasm. It catalyses the reaction tRNA(Lys) + L-lysine + ATP = L-lysyl-tRNA(Lys) + AMP + diphosphate. This is Lysine--tRNA ligase from Dechloromonas aromatica (strain RCB).